The chain runs to 693 residues: Putative transmembrane protein ORF68 (693 aa).

Residues Met1–Ala17 form the signal peptide. At Gln18–Gly666 the chain is on the extracellular side. Residues Ser208–Met256 adopt a coiled-coil conformation. Residues Ile667–Val687 form a helical membrane-spanning segment. Residues Phe688–Val693 lie on the Cytoplasmic side of the membrane.

The protein localises to the host membrane. This is Putative transmembrane protein ORF68 from Magallana gigas (Pacific oyster).